The sequence spans 460 residues: Chromosomal replication initiator protein DnaA (460 aa).

The interval 1-91 is domain I, interacts with DnaA modulators; sequence MNLTSPKVST…SLWQSEDKSI (91 aa). The segment at 91–122 is domain II; sequence IRSIDIQVIEERNSNFNVILKNREESNHNLGS. The interval 123–342 is domain III, AAA+ region; that stretch reads PLDPRFTFDN…GALNKVTHTS (220 aa). Glycine 169, glycine 171, lysine 172, and threonine 173 together coordinate ATP. Positions 343–460 are domain IV, binds dsDNA; sequence LIGRSMTVES…EINRLKKMFK (118 aa).

The protein belongs to the DnaA family. As to quaternary structure, oligomerizes as a right-handed, spiral filament on DNA at oriC.

Its subcellular location is the cytoplasm. Plays an essential role in the initiation and regulation of chromosomal replication. ATP-DnaA binds to the origin of replication (oriC) to initiate formation of the DNA replication initiation complex once per cell cycle. Binds the DnaA box (a 9 base pair repeat at the origin) and separates the double-stranded (ds)DNA. Forms a right-handed helical filament on oriC DNA; dsDNA binds to the exterior of the filament while single-stranded (ss)DNA is stabiized in the filament's interior. The ATP-DnaA-oriC complex binds and stabilizes one strand of the AT-rich DNA unwinding element (DUE), permitting loading of DNA polymerase. After initiation quickly degrades to an ADP-DnaA complex that is not apt for DNA replication. Binds acidic phospholipids. This is Chromosomal replication initiator protein DnaA from Wolbachia pipientis wMel.